The sequence spans 250 residues: MMDTDHTEIIKEGEAVVEAMALLQSRFRRICVFCGSSQGKKKSYQDAAVELGKELVARNIDLVYGGGSVGLMGLVSQAVYNGGRHVIGVIPKTLMPREITGETVGEVKAVADMHQRKAEMARQSDAFIALPGGYGTLEELLEVIAWAQLGIHDKPVGLLNVDGYYNSLLSFIDKAVEEEFISPSARHIIVLAPTPKELLEKLEAYSPRHDKVVPKMQWEMEKMSYCKSCEIPGLKEGNKATIQAQRGSML.

Residues Glu98, 116-117 (RK), and 133-139 (GYGTLEE) each bind substrate.

This sequence belongs to the LOG family. In terms of tissue distribution, expressed in roots, leaves, stems, tiller buds, shoot apex, immature inflorescences and flowers.

It carries out the reaction N(6)-(dimethylallyl)adenosine 5'-phosphate + H2O = N(6)-dimethylallyladenine + D-ribose 5-phosphate. The catalysed reaction is 9-ribosyl-trans-zeatin 5'-phosphate + H2O = trans-zeatin + D-ribose 5-phosphate. Functionally, cytokinin-activating enzyme working in the direct activation pathway. Phosphoribohydrolase that converts inactive cytokinin nucleotides to the biologically active free-base forms. This is Probable cytokinin riboside 5'-monophosphate phosphoribohydrolase LOGL6 (LOGL6) from Oryza sativa subsp. japonica (Rice).